We begin with the raw amino-acid sequence, 418 residues long: Glutamyl-tRNA reductase (418 aa).

Substrate contacts are provided by residues 49–52 (TCNR), Ser-109, 114–116 (EPQ), and Gln-120. Cys-50 serves as the catalytic Nucleophile. 189–194 (GAGETI) is a binding site for NADP(+).

It belongs to the glutamyl-tRNA reductase family. As to quaternary structure, homodimer.

It catalyses the reaction (S)-4-amino-5-oxopentanoate + tRNA(Glu) + NADP(+) = L-glutamyl-tRNA(Glu) + NADPH + H(+). Its pathway is porphyrin-containing compound metabolism; protoporphyrin-IX biosynthesis; 5-aminolevulinate from L-glutamyl-tRNA(Glu): step 1/2. Its function is as follows. Catalyzes the NADPH-dependent reduction of glutamyl-tRNA(Glu) to glutamate 1-semialdehyde (GSA). The chain is Glutamyl-tRNA reductase from Salmonella dublin (strain CT_02021853).